Reading from the N-terminus, the 498-residue chain is MVNIINLWNGIVPMVQDVNVASITAFKSMIDETWDKKIEANTCISRKHRNIIHEVIRDFMKAYPKMDENRKSPLGAPMQWLTQYYILKNEYYKTMLAYDNESLNTKFKTLNIYMITNVGQYILYIVFCIISGKNHNGTPYIYDSEITSNNKNLINDRIKYACKQILHGQLTMALRIRNKFMFIGSPMYLWFNVNGSHVYHEIYDGNVGFHNKEIGRLLYAFMYYLSISDRFLNDFALLKFTYLGESWTFSLSVPEYILYGLGYSVFDTIEKFSNDAILVYIKTNNRNGYDYVEFNKKGIVKVTETKPDNDKRIHAIRLINNSTDVQHIHFGFRNMVIIDNECANIQSSVENATDTGHHQDSKINIKDDDVDDDDYNPKPTPIPEPYPRPPFPRHEYYKRPKLLHVEEPDPVKKDADRIRLDNHILNTLDHNLNSIGHYCCDTAAVDRLEHHIETLGQYAVILARKINMQSLLFPWLLPTVHPHAIDGSIPPHGRSTIL.

Cysteine 43 and cysteine 342 form a disulfide bridge. A disordered region spans residues 352-391 (ATDTGHHQDSKINIKDDDVDDDDYNPKPTPIPEPYPRPPF). A compositionally biased stretch (basic and acidic residues) spans 355 to 367 (TGHHQDSKINIKD). Positions 378–390 (KPTPIPEPYPRPP) are enriched in pro residues.

It belongs to the orthopoxvirus OPG153 protein family. As to quaternary structure, interacts with proteins OPG094 and OPG143. Interacts with OPG154. Interacts with OPG152. Interacts with host laminin.

It is found in the virion membrane. In terms of biological role, envelop protein that mediates acid-dependent endocytosis into host cells. Plays an important role in endocytic entry of the virus by acting as an acid-sensitive membrane fusion suppressor. Low pH in host endosomes triggers conformational changes to allow de-repression of viral fusion complex activity and membrane fusion within vesicles. Also plays a role in bridging the mature virion with structural protein OPG152. The protein is Envelop protein OPG153 (Protein OPG153) of Variola virus (isolate Human/India/Ind3/1967) (VARV).